The primary structure comprises 234 residues: Glucosamine-6-phosphate deaminase (234 aa).

The Proton acceptor; for enolization step role is filled by Asp62. Catalysis depends on Asn128, which acts as the For ring-opening step. The active-site Proton acceptor; for ring-opening step is His130. The active-site For ring-opening step is the Glu135.

The protein belongs to the glucosamine/galactosamine-6-phosphate isomerase family. NagB subfamily.

It carries out the reaction alpha-D-glucosamine 6-phosphate + H2O = beta-D-fructose 6-phosphate + NH4(+). Its pathway is amino-sugar metabolism; N-acetylneuraminate degradation; D-fructose 6-phosphate from N-acetylneuraminate: step 5/5. In terms of biological role, catalyzes the reversible isomerization-deamination of glucosamine 6-phosphate (GlcN6P) to form fructose 6-phosphate (Fru6P) and ammonium ion. This is Glucosamine-6-phosphate deaminase from Streptococcus pyogenes serotype M3 (strain ATCC BAA-595 / MGAS315).